The chain runs to 318 residues: Vomeronasal type-1 receptor A11 (318 aa).

The Extracellular segment spans residues methionine 1 to threonine 32. Residues phenylalanine 33 to leucine 53 traverse the membrane as a helical segment. At lysine 54–aspartate 65 the chain is on the cytoplasmic side. The chain crosses the membrane as a helical span at residues leucine 66–alanine 86. Residues threonine 87 to cysteine 101 lie on the Extracellular side of the membrane. A disulfide bond links cysteine 101 and cysteine 188. The chain crosses the membrane as a helical span at residues lysine 102 to threonine 118. At threonine 119–histidine 147 the chain is on the cytoplasmic side. The chain crosses the membrane as a helical span at residues isoleucine 148–leucine 168. The Extracellular segment spans residues serine 169–alanine 206. N-linked (GlcNAc...) asparagine glycosylation occurs at asparagine 175. Residues leucine 207 to leucine 227 form a helical membrane-spanning segment. Residues cysteine 228–glutamine 254 are Cytoplasmic-facing. Residues threonine 255–cysteine 275 form a helical membrane-spanning segment. The Extracellular portion of the chain corresponds to serine 276 to threonine 285. Residues serine 286–methionine 306 form a helical membrane-spanning segment. At serine 307–glycine 318 the chain is on the cytoplasmic side.

It belongs to the G-protein coupled receptor 1 family.

The protein localises to the cell membrane. Putative pheromone receptor implicated in the regulation of social and reproductive behavior. This is Vomeronasal type-1 receptor A11 from Mus musculus (Mouse).